The following is a 430-amino-acid chain: Alpha-(1-&gt;3)-arabinofuranosyltransferase (430 aa).

Transmembrane regions (helical) follow at residues 26 to 46, 114 to 134, 136 to 156, 160 to 180, 194 to 214, 218 to 238, 276 to 296, 307 to 327, 352 to 372, and 381 to 401; these read APST…LSVI, WYIS…LRIF, YTLS…TESV, LVFT…FRWL, AIGL…LPVL, FYTL…AWPL, WLIL…LWLL, FWLL…LSLG, WPAW…LGHW, and YMKI…VLYF.

It belongs to the glycosyltransferase 87 family.

It localises to the cell membrane. It carries out the reaction Adds an alpha-D-arabinofuranosyl group from trans,octacis-decaprenylphospho-beta-D-arabinofuranose at the 3-O-position of an alpha-(1-&gt;5)-arabinofuranan chain attached to a beta-(1-&gt;5)-galactofuranan chain.. Its pathway is cell wall biogenesis; cell wall polysaccharide biosynthesis. In terms of biological role, involved in the biosynthesis of the arabinogalactan (AG) region of the mycolylarabinogalactan-peptidoglycan (mAGP) complex, an essential component of the mycobacterial cell wall. Catalyzes the addition of an arabinofuranosyl (Araf) residue from the sugar donor beta-D-arabinofuranosyl-1-monophosphoryldecaprenol (DPA) on the C-3 of an alpha-(1-&gt;5)-linked Araf from the arabinan backbone of AG. The polypeptide is Alpha-(1-&gt;3)-arabinofuranosyltransferase (aftC) (Mycolicibacterium smegmatis (strain ATCC 700084 / mc(2)155) (Mycobacterium smegmatis)).